Here is a 332-residue protein sequence, read N- to C-terminus: DNA-directed RNA polymerase subunit alpha (332 aa).

Residues 1-234 (MTVTVSQVLR…DQLSVFGDFT (234 aa)) are alpha N-terminal domain (alpha-NTD). Positions 248–332 (VDPVLLRPID…PGVSQYGMLG (85 aa)) are alpha C-terminal domain (alpha-CTD).

This sequence belongs to the RNA polymerase alpha chain family. Homodimer. The RNAP catalytic core consists of 2 alpha, 1 beta, 1 beta' and 1 omega subunit. When a sigma factor is associated with the core the holoenzyme is formed, which can initiate transcription.

It carries out the reaction RNA(n) + a ribonucleoside 5'-triphosphate = RNA(n+1) + diphosphate. Its function is as follows. DNA-dependent RNA polymerase catalyzes the transcription of DNA into RNA using the four ribonucleoside triphosphates as substrates. The sequence is that of DNA-directed RNA polymerase subunit alpha from Xylella fastidiosa (strain M23).